Consider the following 715-residue polypeptide: Discoidin, CUB and LCCL domain-containing protein 1 (715 aa).

The N-terminal stretch at 1-34 (MVPGARGGGALARAAGRGLLALLLAVSAPLRLQA) is a signal peptide. Residues 35 to 459 (EELGDGCGHL…TSTGINITTV (425 aa)) are Extracellular-facing. 2 disulfide bridges follow: cysteine 41–cysteine 68 and cysteine 94–cysteine 112. One can recognise a CUB domain in the interval 41 to 150 (CGHLVTYQDS…RGFLLTYASS (110 aa)). An N-linked (GlcNAc...) asparagine glycan is attached at asparagine 64. Residue asparagine 124 is glycosylated (N-linked (GlcNAc...) asparagine). The region spanning 152-248 (HPDLITCLER…RDGSLSDKRF (97 aa)) is the LCCL domain. Disulfide bonds link cysteine 158–cysteine 174 and cysteine 178–cysteine 200. The region spanning 248–412 (FLFTSNGCSR…IALKVELIGC (165 aa)) is the F5/8 type C domain. N-linked (GlcNAc...) asparagine glycosylation is present at asparagine 277. The disordered stretch occupies residues 278–312 (ESGDQVHWSPGQARLQDQGPSWASGDSSNNHKPRE). Polar residues predominate over residues 295 to 307 (QGPSWASGDSSNN). Asparagine 351, asparagine 418, and asparagine 455 each carry an N-linked (GlcNAc...) asparagine glycan. The chain crosses the membrane as a helical span at residues 460 to 480 (AIPLVLLVVLVFAGMGIFAAF). At 481–715 (RKKKKKGSPY…LNQTAMTALL (235 aa)) the chain is on the cytoplasmic side. Position 513 is a phosphoserine (serine 513). Position 614 is a phosphothreonine (threonine 614). Residues 619-702 (SGYRVPGPQP…SDSYSAPRDC (84 aa)) form a disordered region.

Its subcellular location is the membrane. This Homo sapiens (Human) protein is Discoidin, CUB and LCCL domain-containing protein 1 (DCBLD1).